The primary structure comprises 1096 residues: Carbamoyl phosphate synthase large chain (1096 aa).

Residues 1–402 (MPKRDDINSV…ALQKALRSLE (402 aa)) are carboxyphosphate synthetic domain. Residues R129, R169, G175, G176, E208, I210, E215, G241, V242, H243, Q285, and E299 each coordinate ATP. The 196-residue stretch at 133 to 328 (KDLVIESGAD…IAKIAAKLAI (196 aa)) folds into the ATP-grasp 1 domain. The Mg(2+) site is built by Q285, E299, and N301. Mn(2+) contacts are provided by Q285, E299, and N301. The tract at residues 403–547 (KRGSSFHWGP…YSSYDSETEI (145 aa)) is oligomerization domain. The segment at 548–950 (VPSDRRKVII…AFAKSQEAAF (403 aa)) is carbamoyl phosphate synthetic domain. Residues 676–870 (SGILDTAGLV…LAKAASLVMV (195 aa)) enclose the ATP-grasp 2 domain. The ATP site is built by R712, R754, L756, E761, G786, I787, H788, S789, Q829, and E841. The Mg(2+) site is built by Q829, E841, and N843. Mn(2+) contacts are provided by Q829, E841, and N843. The MGS-like domain maps to 951 to 1095 (GGLPLSGTVF…QDYAIAREAR (145 aa)). The segment at 951-1096 (GGLPLSGTVF…DYAIAREARR (146 aa)) is allosteric domain.

Belongs to the CarB family. As to quaternary structure, composed of two chains; the small (or glutamine) chain promotes the hydrolysis of glutamine to ammonia, which is used by the large (or ammonia) chain to synthesize carbamoyl phosphate. Tetramer of heterodimers (alpha,beta)4. The cofactor is Mg(2+). Requires Mn(2+) as cofactor.

The enzyme catalyses hydrogencarbonate + L-glutamine + 2 ATP + H2O = carbamoyl phosphate + L-glutamate + 2 ADP + phosphate + 2 H(+). It carries out the reaction hydrogencarbonate + NH4(+) + 2 ATP = carbamoyl phosphate + 2 ADP + phosphate + 2 H(+). It participates in amino-acid biosynthesis; L-arginine biosynthesis; carbamoyl phosphate from bicarbonate: step 1/1. The protein operates within pyrimidine metabolism; UMP biosynthesis via de novo pathway; (S)-dihydroorotate from bicarbonate: step 1/3. Functionally, large subunit of the glutamine-dependent carbamoyl phosphate synthetase (CPSase). CPSase catalyzes the formation of carbamoyl phosphate from the ammonia moiety of glutamine, carbonate, and phosphate donated by ATP, constituting the first step of 2 biosynthetic pathways, one leading to arginine and/or urea and the other to pyrimidine nucleotides. The large subunit (synthetase) binds the substrates ammonia (free or transferred from glutamine from the small subunit), hydrogencarbonate and ATP and carries out an ATP-coupled ligase reaction, activating hydrogencarbonate by forming carboxy phosphate which reacts with ammonia to form carbamoyl phosphate. The chain is Carbamoyl phosphate synthase large chain from Clavibacter michiganensis subsp. michiganensis (strain NCPPB 382).